Consider the following 1319-residue polypeptide: DNA (cytosine-5)-methyltransferase CMT2 (1319 aa).

Residues 1–15 are compositionally biased toward pro residues; the sequence is METPPPDPVSPPPPA. Disordered regions lie at residues 1-34, 142-189, 265-302, and 442-468; these read METP…GGFS, ALDS…VASS, SAAS…KLPA, and KSRV…RART. A compositionally biased stretch (polar residues) spans 266 to 279; sequence AASSMPLNQNGDSS. Residues 285 to 296 show a composition bias toward basic and acidic residues; it reads RVADSRKSRSSE. A BAH domain is found at 602 to 719; the sequence is YTFCIGECAF…IDYSTFSTIE (118 aa). Positions 758 to 1296 constitute an SAM-dependent MTase C5-type domain; that stretch reads LSLLDLYCGC…YALAMAYLKK (539 aa). Residues 863 to 928 form the Chromo domain; it reads FEVWKLVDIC…EGHRQRILPR (66 aa). Residue cysteine 941 is part of the active site.

The protein localises to the nucleus. It carries out the reaction a 2'-deoxycytidine in DNA + S-adenosyl-L-methionine = a 5-methyl-2'-deoxycytidine in DNA + S-adenosyl-L-homocysteine + H(+). Its function is as follows. Involved in CpXpG DNA methylation. The sequence is that of DNA (cytosine-5)-methyltransferase CMT2 from Oryza sativa subsp. japonica (Rice).